Here is a 390-residue protein sequence, read N- to C-terminus: Chorismate synthase (390 aa).

Residues arginine 40 and arginine 46 each contribute to the NADP(+) site. FMN contacts are provided by residues 129–131 (RAS), 249–250 (QA), glycine 294, 309–313 (KPIPT), and arginine 335.

The protein belongs to the chorismate synthase family. Homotetramer. The cofactor is FMNH2.

The catalysed reaction is 5-O-(1-carboxyvinyl)-3-phosphoshikimate = chorismate + phosphate. It participates in metabolic intermediate biosynthesis; chorismate biosynthesis; chorismate from D-erythrose 4-phosphate and phosphoenolpyruvate: step 7/7. Its function is as follows. Catalyzes the anti-1,4-elimination of the C-3 phosphate and the C-6 proR hydrogen from 5-enolpyruvylshikimate-3-phosphate (EPSP) to yield chorismate, which is the branch point compound that serves as the starting substrate for the three terminal pathways of aromatic amino acid biosynthesis. This reaction introduces a second double bond into the aromatic ring system. The chain is Chorismate synthase from Desulforudis audaxviator (strain MP104C).